We begin with the raw amino-acid sequence, 429 residues long: 28S rRNA (cytosine-C(5))-methyltransferase (429 aa).

N-acetylglycine is present on G2. The residue at position 167 (S167) is a Phosphoserine. S-adenosyl-L-methionine-binding positions include 234–240 (CAAPGNK), D258, R263, and D305. C359 (nucleophile) is an active-site residue.

It belongs to the class I-like SAM-binding methyltransferase superfamily. RsmB/NOP family. As to expression, ubiquitous. Detected in placenta, heart and skeletal muscle.

The protein localises to the nucleus. It is found in the nucleolus. The catalysed reaction is cytidine(3782) in 28S rRNA + S-adenosyl-L-methionine = 5-methylcytidine(3782) in 28S rRNA + S-adenosyl-L-homocysteine + H(+). In terms of biological role, S-adenosyl-L-methionine-dependent methyltransferase that specifically methylates the C(5) position of cytosine 3782 (m5C3782) in 28S rRNA. m5C3782 promotes protein translation without affecting ribosome biogenesis and fidelity. Required for corpus callosum and cerebral cortex development. This Homo sapiens (Human) protein is 28S rRNA (cytosine-C(5))-methyltransferase.